The primary structure comprises 325 residues: Solute carrier family 35 member B1 (325 aa).

A run of 8 helical transmembrane segments spans residues 18 to 38 (PVCFLGVFACYFYYGILQESI), 54 to 74 (FALSLVFIQCVINAAFAKLLI), 88 to 108 (WLYAACSLSYLGAMVSSNSAL), 139 to 159 (YPLAKYLCVLLIVTGVALFMY), 171 to 191 (IFGYGELLLLLSLTLDGLTGV), 213 to 233 (LWSTLFLGAGILFTGELWEFL), 246 to 266 (ILLFGLTSALGQSFIFMTVVY), and 288 to 308 (VILFANPISTMQWVGTVLVFL). Residues 321-325 (KKTSH) carry the Di-lysine motif motif.

The protein belongs to the nucleotide-sugar transporter family. SLC35B subfamily.

The protein localises to the endoplasmic reticulum membrane. Its function is as follows. Probable sugar transporter. This chain is Solute carrier family 35 member B1 (SLC35B1), found in Gallus gallus (Chicken).